Consider the following 348-residue polypeptide: tRNA N6-adenosine threonylcarbamoyltransferase (348 aa).

Fe cation contacts are provided by His116 and His120. Substrate is bound by residues 138–142 (QVSGG), Asp171, Gly184, Asp188, and Asn277. Asp309 lines the Fe cation pocket.

The protein belongs to the KAE1 / TsaD family. It depends on Fe(2+) as a cofactor.

The protein resides in the cytoplasm. It catalyses the reaction L-threonylcarbamoyladenylate + adenosine(37) in tRNA = N(6)-L-threonylcarbamoyladenosine(37) in tRNA + AMP + H(+). Functionally, required for the formation of a threonylcarbamoyl group on adenosine at position 37 (t(6)A37) in tRNAs that read codons beginning with adenine. Is involved in the transfer of the threonylcarbamoyl moiety of threonylcarbamoyl-AMP (TC-AMP) to the N6 group of A37, together with TsaE and TsaB. TsaD likely plays a direct catalytic role in this reaction. The chain is tRNA N6-adenosine threonylcarbamoyltransferase from Lactobacillus gasseri (strain ATCC 33323 / DSM 20243 / BCRC 14619 / CIP 102991 / JCM 1131 / KCTC 3163 / NCIMB 11718 / NCTC 13722 / AM63).